The primary structure comprises 2190 residues: Voltage-dependent L-type calcium channel subunit alpha-1D (2190 aa).

Over residues 1 to 10 the composition is skewed to low complexity; that stretch reads MQHHQQQQPE. 2 disordered regions span residues 1-44 and 57-96; these read MQHH…SKQT and QAKAAQNMNTTTAQPVGSLSQRKRQQYAKSKKQGNTSNSR. Residues 1-121 are Cytoplasmic-facing; it reads MQHHQQQQPE…RACISLVEWK (121 aa). Composition is skewed to polar residues over residues 31-44 and 63-76; these read PTTQSNSSAPSKQT and NMNTTTAQPVGSLS. Residues 77-88 show a composition bias toward basic residues; it reads QRKRQQYAKSKK. The stretch at 108–404 is one I repeat; that stretch reads NPIRRACISL…LVLGVLSGEF (297 aa). Residues 122–140 form a helical membrane-spanning segment; that stretch reads PFDIFILLSIFANCVALAV. Residues 141-158 lie on the Extracellular side of the membrane; sequence YIPFPEDDSNSTNHNLEK. An N-linked (GlcNAc...) asparagine glycan is attached at Asn-150. Residues 159 to 178 form a helical membrane-spanning segment; it reads VEYAFLIIFTVETFLKIIAY. Topologically, residues 179-190 are cytoplasmic; sequence GLLLHPNAYVRN. A helical membrane pass occupies residues 191–209; that stretch reads GWNLLDFVIVVVGLFSVIL. At 210-230 the chain is on the extracellular side; it reads EQLTKETEGGSHSGGKPGGFD. A helical transmembrane segment spans residues 231–249; the sequence is VKALRAFRVLRPLRLVSGV. The Cytoplasmic segment spans residues 250–268; sequence PSLQVVLNSIIKAMVPLLH. The helical transmembrane segment at 269–288 threads the bilayer; sequence IALLVLFVIIIYAIIGLELF. Residues 289–376 are Extracellular-facing; it reads IGKMHKSCFL…WVNDAIGCEW (88 aa). A glycan (N-linked (GlcNAc...) asparagine) is linked at Asn-324. Glu-359 is a binding site for Ca(2+). Residues 377-401 traverse the membrane as a helical segment; that stretch reads PWIYFVSLIILGSFFVLNLVLGVLS. The Cytoplasmic portion of the chain corresponds to 402-544; the sequence is GEFSKEREKA…RKCRAAVKSV (143 aa). A binding to the beta subunit region spans residues 424–441; the sequence is QQLEEDLKGYLDWITQAE. The interval 478–500 is disordered; it reads GRSSNKHASMPTSETESVNTENV. The II repeat unit spans residues 530 to 776; it reads NRFNRRKCRA…VFLAIAVDNL (247 aa). A helical membrane pass occupies residues 545–564; that stretch reads TFYWLVIVLVFLNTLTISSE. The Extracellular segment spans residues 565-579; sequence HYNQPDWLTQIQDIA. The chain crosses the membrane as a helical span at residues 580–598; it reads NKVLLALFTCEMLVKMYSL. Residues 599–606 are Cytoplasmic-facing; sequence GLQAYFVS. Residues 607–625 traverse the membrane as a helical segment; the sequence is LFNRFDCFVVCGGIVETIL. At 626 to 635 the chain is on the extracellular side; sequence VELEIMSPLG. The helical transmembrane segment at 636 to 654 threads the bilayer; sequence ISVFRCVRLLRIFKVTRHW. At 655 to 673 the chain is on the cytoplasmic side; that stretch reads ASLSNLVASLLNSMKSIAS. A helical membrane pass occupies residues 674–694; sequence LLLLLFLFIIIFSLLGMQLFG. Residues 695–748 are Extracellular-facing; it reads GKFNFDETQTKRSTFDNFPQALLTVFQILTGEDWNAVMYDGIMAYGGPSSSGMI. A Ca(2+)-binding site is contributed by Glu-726. The helical transmembrane segment at 749–773 threads the bilayer; sequence VCIYFIILFICGNYILLNVFLAIAV. The Cytoplasmic segment spans residues 774 to 907; that stretch reads DNLADAESLN…VGCHRLINHH (134 aa). Positions 787 to 823 are enriched in basic and acidic residues; the sequence is KEEAEEKERKKNARKESLENKKSEKSEGDQKKPKDSK. The disordered stretch occupies residues 787 to 869; sequence KEEAEEKERK…VPAGPRPRRI (83 aa). Residues 847–859 are compositionally biased toward acidic residues; sequence VGEDEEDEEDEPE. One copy of the III repeat lies at 894-1176; sequence NPIRVGCHRL…IFVGFVIVTF (283 aa). A helical transmembrane segment spans residues 908–926; that stretch reads IFTNLILVFIMLSSVSLAA. Residues 927–942 lie on the Extracellular side of the membrane; it reads EDPIRSHSFRNNILGY. The helical transmembrane segment at 943–962 threads the bilayer; that stretch reads ADYVFTSMFTFEIILKMTAF. The Cytoplasmic portion of the chain corresponds to 963–974; sequence GAFLHKGSFCRN. A helical transmembrane segment spans residues 975 to 993; the sequence is YFNLLDLLVVGVSLVSFGI. The Extracellular portion of the chain corresponds to 994–999; the sequence is QSSAIS. Residues 1000 to 1019 form a helical membrane-spanning segment; sequence VVKILRVLRVLRPLRAINRA. Residues 1020–1038 are Cytoplasmic-facing; it reads KGLKHVVQCVFVAIRTIGN. The helical transmembrane segment at 1039–1058 threads the bilayer; the sequence is IMIVTTLLQFMFACIGVQLF. Over 1059–1148 the chain is Extracellular; sequence KGKFYKCTDE…VGPVYNYRVE (90 aa). The dihydropyridine binding stretch occupies residues 1096-1186; the sequence is RVWQNSDFNF…QEQGEQEYKN (91 aa). Glu-1122 lines the Ca(2+) pocket. The helical transmembrane segment at 1149-1169 threads the bilayer; it reads ISIFFIIYIIIIAFFMMNIFV. Over 1170–1226 the chain is Cytoplasmic; it reads GFVIVTFQEQGEQEYKNCELDKNQRQCVEYALKARPLRRYIPKNPYQYKFWYVVNST. An IV repeat occupies 1213–1496; sequence NPYQYKFWYV…LFVAVIMDNF (284 aa). The chain crosses the membrane as a helical span at residues 1227–1245; that stretch reads GFEYIMFVLIMLNTLCLAM. Residues 1246 to 1260 lie on the Extracellular side of the membrane; that stretch reads QHYGQSKLFNDAMDI. Residues 1261-1280 traverse the membrane as a helical segment; that stretch reads MNMVFTGVFTVEMVLKLIAF. Residues 1281–1297 lie on the Cytoplasmic side of the membrane; the sequence is KPKIFVRKKERWLGYFS. The chain crosses the membrane as a helical span at residues 1298–1319; the sequence is DAWNTFDSLIVIGSIVDVVLSE. At 1320–1342 the chain is on the extracellular side; the sequence is ADPKPTETVTTDESGNSEDSARI. Residues 1343-1362 traverse the membrane as a helical segment; that stretch reads SITFFRLFRVMRLVKLLSRG. Residues 1363–1381 lie on the Cytoplasmic side of the membrane; it reads EGIRTLLWTFIKSFQALPY. Residues 1382 to 1401 form a helical membrane-spanning segment; it reads VALLIAMLFFIYAVIGMQVF. The Extracellular segment spans residues 1402-1468; the sequence is GKVAMRDNNQ…GEEYTCGSNF (67 aa). The dihydropyridine binding stretch occupies residues 1449-1515; the sequence is RCDPESDYNP…LGPHHLDEFK (67 aa). Residues 1461 to 1504 form a phenylalkylamine binding region; the sequence is EYTCGSNFAIIYFISFYMLCAFLIINLFVAVIMDNFDYLTRDWS. The helical transmembrane segment at 1469–1493 threads the bilayer; sequence AIIYFISFYMLCAFLIINLFVAVIM. The Cytoplasmic segment spans residues 1494–2190; the sequence is DNFDYLTRDW…ADEMICITSL (697 aa). Disordered stretches follow at residues 1736–1787, 1803–1833, 1917–1952, and 1995–2025; these read THRP…NANL, FGSHEHRSENGYHSYSRADHEKRRRPSSRRT, HGFFEEDDSQTCYDTKRSPRRRLLPPTPASNRRSSF, and SSKAHKHSPSRSTRSWATPPATPPNRDHTPY. Positions 1805 to 1823 are enriched in basic and acidic residues; the sequence is SHEHRSENGYHSYSRADHE. Basic residues predominate over residues 1824–1833; that stretch reads KRRRPSSRRT.

It belongs to the calcium channel alpha-1 subunit (TC 1.A.1.11) family. CACNA1D subfamily. As to quaternary structure, voltage-dependent calcium channels are multisubunit complexes, consisting of alpha-1, alpha-2, beta and delta subunits in a 1:1:1:1 ratio. The channel activity is directed by the pore-forming and voltage-sensitive alpha-1 subunit. In many cases, this subunit is sufficient to generate voltage-sensitive calcium channel activity. The auxiliary subunits beta and alpha-2/delta linked by a disulfide bridge regulate the channel activity. Interacts with RIMBP2. As to expression, expressed in the basilar papilla of the cochlea.

The protein localises to the membrane. The catalysed reaction is Ca(2+)(in) = Ca(2+)(out). Functionally, the isoform alpha-1D gives rise to L-type calcium currents. Long-lasting (L-type) calcium channels belong to the 'high-voltage activated' (HVA) group. The polypeptide is Voltage-dependent L-type calcium channel subunit alpha-1D (CACNA1D) (Gallus gallus (Chicken)).